The chain runs to 264 residues: DNA repair protein RecO (264 aa).

Belongs to the RecO family.

Functionally, involved in DNA repair and RecF pathway recombination. The sequence is that of DNA repair protein RecO from Leuconostoc citreum (strain KM20).